Consider the following 196-residue polypeptide: Metalloproteinase inhibitor 2 (196 aa).

A signal peptide spans 1-2 (RA). Residue cysteine 3 participates in Zn(2+) binding. Involved in metalloproteinase-binding stretches follow at residues 3–6 (CSCS) and 71–72 (SA). Cystine bridges form between cysteine 3–cysteine 74, cysteine 5–cysteine 103, cysteine 15–cysteine 128, cysteine 130–cysteine 177, cysteine 135–cysteine 140, and cysteine 148–cysteine 169. One can recognise an NTR domain in the interval 3-128 (CSCSPVHPQQ…SLNHRYQMGC (126 aa)).

It belongs to the protease inhibitor I35 (TIMP) family. Interacts (via the C-terminal) with MMP2 (via the C-terminal PEX domain); the interaction inhibits the MMP2 activity. The activity of TIMP2 is dependent on the presence of disulfide bonds.

It localises to the secreted. Functionally, complexes with metalloproteinases (such as collagenases) and irreversibly inactivates them by binding to their catalytic zinc cofactor. The sequence is that of Metalloproteinase inhibitor 2 (TIMP2) from Cricetulus longicaudatus (Long-tailed dwarf hamster).